Reading from the N-terminus, the 311-residue chain is Methionyl-tRNA formyltransferase (311 aa).

Serine 109–proline 112 is a binding site for (6S)-5,6,7,8-tetrahydrofolate.

Belongs to the Fmt family.

The enzyme catalyses L-methionyl-tRNA(fMet) + (6R)-10-formyltetrahydrofolate = N-formyl-L-methionyl-tRNA(fMet) + (6S)-5,6,7,8-tetrahydrofolate + H(+). In terms of biological role, attaches a formyl group to the free amino group of methionyl-tRNA(fMet). The formyl group appears to play a dual role in the initiator identity of N-formylmethionyl-tRNA by promoting its recognition by IF2 and preventing the misappropriation of this tRNA by the elongation apparatus. In Mycoplasma pneumoniae (strain ATCC 29342 / M129 / Subtype 1) (Mycoplasmoides pneumoniae), this protein is Methionyl-tRNA formyltransferase (fmt).